Reading from the N-terminus, the 63-residue chain is Conotoxin Lt11.1 (63 aa).

The N-terminal stretch at 1–23 (MMFRLTSVLLVIVLLNLVVLTNA) is a signal peptide. Cystine bridges form between Cys24–Cys34, Cys28–Cys39, Cys33–Cys42, and Cys38–Cys47. Residues 53–63 (ALLQRLLGHQR) constitute a propeptide that is removed on maturation.

The protein belongs to the conotoxin I2 superfamily. In terms of tissue distribution, expressed by the venom duct.

The protein resides in the secreted. The sequence is that of Conotoxin Lt11.1 from Conus litteratus (Lettered cone).